Here is a 480-residue protein sequence, read N- to C-terminus: Glutamate--tRNA ligase 2 (480 aa).

A 'HIGH' region motif is present at residues 15 to 25 (PSPTGYLHVGG). A 'KMSKS' region motif is present at residues 248-252 (RLSKR). Lys251 is a binding site for ATP.

This sequence belongs to the class-I aminoacyl-tRNA synthetase family. Glutamate--tRNA ligase type 1 subfamily. In terms of assembly, monomer.

The protein localises to the cytoplasm. The enzyme catalyses tRNA(Glu) + L-glutamate + ATP = L-glutamyl-tRNA(Glu) + AMP + diphosphate. Catalyzes the attachment of glutamate to tRNA(Glu) in a two-step reaction: glutamate is first activated by ATP to form Glu-AMP and then transferred to the acceptor end of tRNA(Glu). In Koribacter versatilis (strain Ellin345), this protein is Glutamate--tRNA ligase 2.